The sequence spans 165 residues: Protein SprT (165 aa).

Positions 10-158 (EACYRQAEHF…CRRCKATLVF (149 aa)) constitute a SprT-like domain. H69 is a Zn(2+) binding site. Residue E70 is part of the active site. H73 lines the Zn(2+) pocket.

It belongs to the SprT family. Requires Zn(2+) as cofactor.

The protein localises to the cytoplasm. In Pseudomonas aeruginosa (strain UCBPP-PA14), this protein is Protein SprT.